The primary structure comprises 481 residues: Cys-Gly metallodipeptidase DUG1 (481 aa).

Residue H102 coordinates Zn(2+). Residue D104 is part of the active site. Residue D137 coordinates Zn(2+). E171 functions as the Proton acceptor in the catalytic mechanism. Residues E172, D200, and H450 each contribute to the Zn(2+) site. S451 bears the Phosphoserine mark.

Belongs to the peptidase M20A family. In terms of assembly, homodimer. Component of the GSH degradosomal complex composed of at least DUG1, DUG2 and DUG3. Requires Zn(2+) as cofactor. Mn(2+) is required as a cofactor.

The protein localises to the cytoplasm. The protein resides in the mitochondrion. Functionally, catalytic component of the GSH degradosomal complex involved in the degradation of glutathione (GSH) and other peptides containing a gamma-glu-X bond. Also functions in a DUG2-DUG3-independent manner as a dipeptidase with high specificity for Cys-Gly and no activity toward tri- or tetrapeptides. This chain is Cys-Gly metallodipeptidase DUG1 (DUG1), found in Saccharomyces cerevisiae (strain ATCC 204508 / S288c) (Baker's yeast).